Reading from the N-terminus, the 257-residue chain is Distal membrane-arm assembly complex protein 2 (257 aa).

Phosphoserine is present on S253.

This sequence belongs to the ATP synthase subunit s family. Interacts with incompletely assembled mitochondrial NADH:ubiquinone oxidoreductase complex (complex I).

It localises to the mitochondrion. In terms of biological role, required for the assembly of the mitochondrial NADH:ubiquinone oxidoreductase complex (complex I). Involved in the assembly of the distal region of complex I. The polypeptide is Distal membrane-arm assembly complex protein 2 (Homo sapiens (Human)).